The chain runs to 493 residues: MQVIETLAEGLKRELKVIIPAADMEAQMNERLADVKDKVRINGFRPGKVPAGHLKKMYGKSVMAELVNEIVRDRPSAILSERGEKSATQPEVAMTEDEAEADKILNAQADFEFTLAYEVIPAIELKPVDGIKIVREVVEVSEDEVNEQIMKIAESARTFATKDGVAADGDRVTMDYLGKVDGVPFDGGKDEDAELVIGSNRFIPGFEEQLVGLKAGDEKVINVTFPTEYPAANLAGKDATFDITVKEVAAPAETEINDELATKLGLESVDKLKEIVRGQIESQYGNVTRQKIKRQILDQLDEMYKFEAPSRLVDAEFDNIWRQINTDLQQSGKTFEDEETTEDAAREEYRALAERRVRLGLVLSEIGEKAAIDVTEEEMQRALYAQLQQFPGQEKQIIDFFRNTPGASASLRAPIFEEKVMDKLISEVNVTDKTVTKEELLAEDEDGDDTKPAKKSAKKKAAKAEDASAEGEEAAPKKKAAAKKKAADEGDAE.

In terms of domain architecture, PPIase FKBP-type spans 169 to 254; it reads GDRVTMDYLG…VKEVAAPAET (86 aa). The segment at 439–493 is disordered; that stretch reads ELLAEDEDGDDTKPAKKSAKKKAAKAEDASAEGEEAAPKKKAAAKKKAADEGDAE.

It belongs to the FKBP-type PPIase family. Tig subfamily.

It localises to the cytoplasm. The enzyme catalyses [protein]-peptidylproline (omega=180) = [protein]-peptidylproline (omega=0). Involved in protein export. Acts as a chaperone by maintaining the newly synthesized protein in an open conformation. Functions as a peptidyl-prolyl cis-trans isomerase. This Allorhizobium ampelinum (strain ATCC BAA-846 / DSM 112012 / S4) (Agrobacterium vitis (strain S4)) protein is Trigger factor.